The primary structure comprises 1065 residues: Presequence protease, mitochondrial (1065 aa).

Residues 1–42 (MLRSFSGAGKCKCRIPVSRQPVCGRSLRISSTLTPWNQSRRA) constitute a mitochondrion transit peptide. H117 serves as a coordination point for Zn(2+). E120 acts as the Proton acceptor in catalysis. Position 121 (H121) interacts with Zn(2+). E193 is a catalytic residue. Residue E230 coordinates Zn(2+).

Belongs to the peptidase M16 family. PreP subfamily. Monomer and homodimer; homodimerization is induced by binding of the substrate. Zn(2+) serves as cofactor.

It localises to the mitochondrion intermembrane space. The protein localises to the mitochondrion matrix. In terms of biological role, degrades mitochondrial transit peptides after their cleavage in the intermembrane space or in the matrix, and presequence peptides; clearance of these peptides is required to keep the presequence processing machinery running. Preferentially cleaves the N-terminal side of paired basic amino acid residues. Also degrades other unstructured peptides. May function as an ATP-dependent peptidase as opposed to a metalloendopeptidase. The polypeptide is Presequence protease, mitochondrial (cym1) (Aspergillus fumigatus (strain ATCC MYA-4609 / CBS 101355 / FGSC A1100 / Af293) (Neosartorya fumigata)).